Consider the following 338-residue polypeptide: Photosystem II assembly lipoprotein Ycf48 (338 aa).

A signal peptide spans 1–23 (MKKIITSFPNLLLSILLCFVLSS). Cys24 is lipidated: N-palmitoyl cysteine. Cys24 carries the S-diacylglycerol cysteine lipid modification.

Belongs to the Ycf48 family. In terms of assembly, part of early PSII assembly complexes which includes D1 (psbA) and PsbI; not found in mature PSII. Binds to the lumenal side of PSII complexes. Interacts with YidC.

It localises to the cellular thylakoid membrane. Functionally, a factor required for optimal assembly of photosystem II (PSII), acting in the early stages of PSII assembly. Also plays a role in replacement of photodamaged D1 (psbA). Assists YidC in synthesis of chlorophyll-binding proteins. The protein is Photosystem II assembly lipoprotein Ycf48 of Prochlorococcus marinus (strain MIT 9312).